A 273-amino-acid polypeptide reads, in one-letter code: MENRKNYFHLHLVSDSTGETLIAAGRAAAAQFQSSHALEHVYPLIRNKKQLMQVLDAIDGAPGIVLYTIVDRELAGMIDQRCREIGVPCVSVLDPIIELFQSYLGSPSRRRSGAQHVMDADYFARIEALNFTMDHDDGQMPADFNEADVVLIGVSRTSKTPTSIYLANRGIKTANIPIVPGVPLPDGLLRATKPLVVGLIASADRLSQVRQHRVLGTTQSFHGEEYTDRAAISEELKYARTLCARNNWPLIDVTRRSIEETAAAIVALRPRLR.

153–160 provides a ligand contact to ADP; sequence GVSRTSKT.

Belongs to the pyruvate, phosphate/water dikinase regulatory protein family. PDRP subfamily.

It catalyses the reaction N(tele)-phospho-L-histidyl/L-threonyl-[pyruvate, phosphate dikinase] + ADP = N(tele)-phospho-L-histidyl/O-phospho-L-threonyl-[pyruvate, phosphate dikinase] + AMP + H(+). The catalysed reaction is N(tele)-phospho-L-histidyl/O-phospho-L-threonyl-[pyruvate, phosphate dikinase] + phosphate + H(+) = N(tele)-phospho-L-histidyl/L-threonyl-[pyruvate, phosphate dikinase] + diphosphate. Functionally, bifunctional serine/threonine kinase and phosphorylase involved in the regulation of the pyruvate, phosphate dikinase (PPDK) by catalyzing its phosphorylation/dephosphorylation. In Sinorhizobium fredii (strain NBRC 101917 / NGR234), this protein is Putative pyruvate, phosphate dikinase regulatory protein.